Here is a 231-residue protein sequence, read N- to C-terminus: NADH-ubiquinone oxidoreductase chain 4 (231 aa).

The next 7 membrane-spanning stretches (helical) occupy residues 1-21, 34-54, 63-85, 89-111, 128-148, 156-176, and 211-231; these read PIAG…YGII, MFLP…LTCL, IAYS…TPWG, AMAL…NTTY, ILPM…AIPP, LLIM…LGLS, and LLMI…ELII.

It belongs to the complex I subunit 4 family.

The protein resides in the mitochondrion membrane. The enzyme catalyses a ubiquinone + NADH + 5 H(+)(in) = a ubiquinol + NAD(+) + 4 H(+)(out). In terms of biological role, core subunit of the mitochondrial membrane respiratory chain NADH dehydrogenase (Complex I) that is believed to belong to the minimal assembly required for catalysis. Complex I functions in the transfer of electrons from NADH to the respiratory chain. The immediate electron acceptor for the enzyme is believed to be ubiquinone. The sequence is that of NADH-ubiquinone oxidoreductase chain 4 (MT-ND4) from Agkistrodon piscivorus piscivorus (Eastern cottonmouth).